The primary structure comprises 1644 residues: Peroxisome proliferator-activated receptor gamma coactivator-related protein 1 (1644 aa).

Disordered stretches follow at residues 1-61 (MAAR…DSSF), 170-249 (PERD…EVAG), 429-616 (LTPK…TSPV), 646-761 (AADP…PETP), 773-884 (SAPA…QPPG), 978-1074 (STVS…EGVV), and 1322-1507 (AAPP…NDHY). Pro residues predominate over residues 12 to 22 (APPPTGGPGPD). The span at 213-222 (SSPKLPSWRP) shows a compositional bias: low complexity. The residue at position 232 (S232) is a Phosphoserine. The segment at 425 to 460 (IMESLTPKEPQSLPASASQGSQKVPRKGRKKKNKEQ) is necessary for interaction with CREB1 and NRF1 and for transcriptional coactivation. Positions 437–446 (LPASASQGSQ) are enriched in polar residues. Over residues 448 to 457 (VPRKGRKKKN) the composition is skewed to basic residues. A compositionally biased stretch (polar residues) spans 475–496 (SSRGQSTVSAEVNSQAGSSQKQ). Residues 515–524 (RAWARAWAAA) show a composition bias toward low complexity. Position 541 is a phosphoserine (S541). Polar residues predominate over residues 556-572 (ETSQANPTLSLNDSAQA). Basic and acidic residues predominate over residues 691 to 702 (DHPKVVSPEGKD). Residues 811–821 (MVSTHSEQVSS) show a composition bias toward polar residues. Composition is skewed to pro residues over residues 828 to 864 (VRPPPPPLPSVSPAGPIPSTVPAPLPPFPPSVPPLLP) and 874 to 884 (RLPPPPLQPPG). Residues S1059, S1393, and S1395 each carry the phosphoserine modification. The necessary for interaction with CREB1 and NRF1 stretch occupies residues 1361–1432 (EASPCRSEMN…SSSSSVSSSS (72 aa)). Low complexity-rich tracts occupy residues 1409-1433 (SRSVSSGSSRTSEASSSSSVSSSSR) and 1453-1489 (SSCSSSGRSRRCSSSSSSSSSSSSCSSRSRSPSVSPC). Positions 1523 to 1599 (RVVFIGKIPG…QPFDLCFGGR (77 aa)) constitute an RRM domain.

Interacts with CREB1 and NRF1. Expressed in liver, heart, skeletal muscle, kidney and white and brown adipose tissues.

It is found in the nucleus. In terms of biological role, acts as a coactivator during transcriptional activation of nuclear genes related to mitochondrial biogenesis and cell growth. Involved in the transcription coactivation of CREB and NRF1 target genes. The sequence is that of Peroxisome proliferator-activated receptor gamma coactivator-related protein 1 (Pprc1) from Mus musculus (Mouse).